Consider the following 144-residue polypeptide: L-fucose mutarotase (144 aa).

Catalysis depends on His22, which acts as the Proton donor. Substrate contacts are provided by residues Asp30, Arg109, and 131 to 133; that span reads YGN.

This sequence belongs to the RbsD / FucU family. FucU mutarotase subfamily. In terms of assembly, homodecamer.

The protein localises to the cytoplasm. The enzyme catalyses alpha-L-fucose = beta-L-fucose. It functions in the pathway carbohydrate metabolism; L-fucose metabolism. Involved in the anomeric conversion of L-fucose. This chain is L-fucose mutarotase, found in Histophilus somni (strain 129Pt) (Haemophilus somnus).